The chain runs to 451 residues: DNA-directed RNA polymerase subunit Rpo1C (451 aa).

A unknown region spans residues 1–68 (MQDIIGKIED…DDDELLDAVE (68 aa)). Residues 69–451 (DDYQRILKVQ…SVSVVMKERK (383 aa)) are DNA-directed RNA polymerase subunit Rpo1C.

Belongs to the RNA polymerase beta' chain family. In terms of assembly, part of the RNA polymerase complex.

The protein localises to the cytoplasm. It catalyses the reaction RNA(n) + a ribonucleoside 5'-triphosphate = RNA(n+1) + diphosphate. DNA-dependent RNA polymerase (RNAP) catalyzes the transcription of DNA into RNA using the four ribonucleoside triphosphates as substrates. Forms part of the jaw domain. In Methanothermobacter thermautotrophicus (strain ATCC 29096 / DSM 1053 / JCM 10044 / NBRC 100330 / Delta H) (Methanobacterium thermoautotrophicum), this protein is DNA-directed RNA polymerase subunit Rpo1C.